A 198-amino-acid chain; its full sequence is ATP-dependent Clp protease proteolytic subunit (198 aa).

Serine 98 serves as the catalytic Nucleophile. The active site involves histidine 123.

This sequence belongs to the peptidase S14 family. In terms of assembly, fourteen ClpP subunits assemble into 2 heptameric rings which stack back to back to give a disk-like structure with a central cavity, resembling the structure of eukaryotic proteasomes.

It is found in the cytoplasm. The enzyme catalyses Hydrolysis of proteins to small peptides in the presence of ATP and magnesium. alpha-casein is the usual test substrate. In the absence of ATP, only oligopeptides shorter than five residues are hydrolyzed (such as succinyl-Leu-Tyr-|-NHMec, and Leu-Tyr-Leu-|-Tyr-Trp, in which cleavage of the -Tyr-|-Leu- and -Tyr-|-Trp bonds also occurs).. Functionally, cleaves peptides in various proteins in a process that requires ATP hydrolysis. Has a chymotrypsin-like activity. Plays a major role in the degradation of misfolded proteins. In Listeria monocytogenes serovar 1/2a (strain ATCC BAA-679 / EGD-e), this protein is ATP-dependent Clp protease proteolytic subunit.